Consider the following 354-residue polypeptide: Protein sex-lethal (354 aa).

The tract at residues 1–20 (MYGNNNPGSNNNNGGYPPYG) is disordered. RRM domains follow at residues 127 to 205 (TNLI…YARP) and 213 to 293 (TNLY…LAQE).

Part of a complex containing fl(2)d, Sxl and vir. Interacts with nito. Interacts with Unr; cooperates with Sxl to prevent translation of msl-2 transcripts. Interacts with how; promoting nuclear retention of msl-2 transcripts. The embryo-specific isoform is not expressed in the pole cells, which are the progenitors of the germline.

The protein localises to the nucleus. It localises to the cytoplasm. Its function is as follows. Sex determination switch protein, which controls sexual development and dosage compensation in females. Sxl protein is only active in females: it is inactive in males throughout development. Acts as a mRNA-binding protein, which specifically binds to a subset of pre-mRNAs and mRNAs and regulates their processing and/or translation. Promotes sexual development by controlling the female-specific alternative splicing of the transformer (tra) pre-mRNA: binds tightly to a characteristic uridine-rich polypyrimidine tract at the non-sex specific 3' splice site in one of the tra introns, preventing the general splicing factor U2AF from binding to this site and forcing it to bind to the female-specific 3' splice site. Acts as an inhibitor of dosage compensation in females by preventing production of msl-2 protein, an essential component of the MSL complex, the complex that mediates X-chromosome dosage compensation. Specifially binds to uridine stretches in both the 5'- and 3'-UTR of msl-2 transcripts. Sxl first acts at the splicing level by promoting retention of an intron in the 5' UTR of msl-2 pre-mRNA. The retained intron contains Sxl-binding sites that are required for subsequent steps of repression: after msl-2 mRNA export into the cytoplasm, Sxl coordinates its translational repression by targeting early steps of translation initiation. Together with how, Sxl also prevents production of msl-2 protein by preventing nuclear export of msl-2 transcripts. The sequence is that of Protein sex-lethal from Drosophila subobscura (Fruit fly).